Reading from the N-terminus, the 419-residue chain is Transcription termination factor Rho (419 aa).

In terms of domain architecture, Rho RNA-BD spans aspartate 48–lysine 123. 3 RNA-binding regions span residues glycine 61–arginine 66, aspartate 78–tyrosine 80, and glutamate 108–tyrosine 110. Residues glycine 169–glycine 174, lysine 181–isoleucine 186, and arginine 212 each bind ATP. The interval valine 284 to glycine 288 is RNA-binding 2.

This sequence belongs to the Rho family. Homohexamer. The homohexamer assembles into an open ring structure.

Facilitates transcription termination by a mechanism that involves Rho binding to the nascent RNA, activation of Rho's RNA-dependent ATPase activity, and release of the mRNA from the DNA template. The protein is Transcription termination factor Rho of Buchnera aphidicola subsp. Schizaphis graminum (strain Sg).